A 229-amino-acid polypeptide reads, in one-letter code: Cytidylate kinase (229 aa).

Glycine 12–threonine 20 is an ATP binding site.

The protein belongs to the cytidylate kinase family. Type 1 subfamily.

The protein localises to the cytoplasm. It catalyses the reaction CMP + ATP = CDP + ADP. It carries out the reaction dCMP + ATP = dCDP + ADP. This chain is Cytidylate kinase, found in Pseudomonas fluorescens (strain SBW25).